Here is a 283-residue protein sequence, read N- to C-terminus: Formamidopyrimidine-DNA glycosylase (283 aa).

The active-site Schiff-base intermediate with DNA is Pro-2. Glu-3 serves as the catalytic Proton donor. The active-site Proton donor; for beta-elimination activity is the Lys-58. Residues His-100, Arg-119, and Arg-162 each contribute to the DNA site. The segment at 247-283 adopts an FPG-type zinc-finger fold; it reads RVYGREGLPCVTPGCSGTVGRIVQSGRSSFHCPLCQR. Residue Arg-273 is the Proton donor; for delta-elimination activity of the active site.

This sequence belongs to the FPG family. As to quaternary structure, monomer. Zn(2+) is required as a cofactor.

The catalysed reaction is Hydrolysis of DNA containing ring-opened 7-methylguanine residues, releasing 2,6-diamino-4-hydroxy-5-(N-methyl)formamidopyrimidine.. The enzyme catalyses 2'-deoxyribonucleotide-(2'-deoxyribose 5'-phosphate)-2'-deoxyribonucleotide-DNA = a 3'-end 2'-deoxyribonucleotide-(2,3-dehydro-2,3-deoxyribose 5'-phosphate)-DNA + a 5'-end 5'-phospho-2'-deoxyribonucleoside-DNA + H(+). Involved in base excision repair of DNA damaged by oxidation or by mutagenic agents. Acts as a DNA glycosylase that recognizes and removes damaged bases. Has a preference for oxidized purines, such as 7,8-dihydro-8-oxoguanine (8-oxoG). Has AP (apurinic/apyrimidinic) lyase activity and introduces nicks in the DNA strand. Cleaves the DNA backbone by beta-delta elimination to generate a single-strand break at the site of the removed base with both 3'- and 5'-phosphates. The chain is Formamidopyrimidine-DNA glycosylase from Cereibacter sphaeroides (strain KD131 / KCTC 12085) (Rhodobacter sphaeroides).